Here is a 449-residue protein sequence, read N- to C-terminus: Guanine nucleotide-binding protein alpha-2 subunit (449 aa).

The tract at residues 1-91 (MGLCASSEKN…TATANTSGSQ (91 aa)) is disordered. The N-myristoyl glycine moiety is linked to residue G2. The S-palmitoyl cysteine moiety is linked to residue C4. 2 stretches are compositionally biased toward polar residues: residues 7–23 (SEKNGSTPDTQTASAGS) and 38–48 (QKTVRTVNTAN). The span at 49–59 (QQEKQQQRQQQ) shows a compositional bias: low complexity. Residues 72-91 (NGSINNAISPTATANTSGSQ) show a composition bias toward polar residues. The G-alpha domain maps to 122-448 (KELKVLLLGA…ENTLKDSGVL (327 aa)). The G1 motif stretch occupies residues 125-138 (KVLLLGAGESGKST). 14 residues coordinate GTP: E133, S134, G135, K136, S137, T138, D245, L270, T276, G299, N365, K366, D368, and A420. Residue S137 coordinates Mg(2+). A G2 motif region spans residues 268-276 (DILRSRQMT). T276 is a Mg(2+) binding site. The interval 292–301 (MHIYDVGGQR) is G3 motif. Residues 361–368 (VLFLNKID) form a G4 motif region. Residues 418-423 (TQATDT) form a G5 motif region.

Belongs to the G-alpha family. G(q) subfamily. G proteins are composed of 3 units; alpha, beta and gamma. The alpha chain contains the guanine nucleotide binding site. GPA2 interacts with the kelch repeat beta-mimic proteins GPB1 and GPB2 and with the gamma subunit GPG1. Interacts with the G protein coupled receptor GPR1. Also interacts with regulators of G protein signaling (RGS) protein RGS2. Requires Mg(2+) as cofactor. In terms of processing, myristoylation at Gly-2 and palmitoylation at Cys-4 are required for membrane localization and function of the protein.

The protein resides in the cell membrane. Its activity is regulated as follows. Alternates between an inactive form bound to GDP and an active form bound to GTP. Activated by the G protein coupled receptor (GPCR) GPR1, which serves as a guanine nucleotide-exchange factor (GEF), and inactivated by RGS2, acting as a GTPase-activating protein (GAP) for GPA2. Alpha subunit of the heterotrimeric guanine nucleotide-binding protein (G protein) involved in glucose-induced cAMP signaling. Binds to its cognate transmembrane receptor GPR1, which senses extracellular carbon sources, and activates cAMP-PKA signaling and governs diploid pseudohyphal differentiation and haploid invasive growth. The G protein beta-mimic proteins GPB1 and GPB2 inhibit GPA2-GPR1 coupling, probably to reduce signaling in the absence of glucose. The sequence is that of Guanine nucleotide-binding protein alpha-2 subunit (GPA2) from Saccharomyces cerevisiae (strain ATCC 204508 / S288c) (Baker's yeast).